The sequence spans 207 residues: Large ribosomal subunit protein uL4 (207 aa).

The tract at residues 50-76 (AVKNRSAVSGGGRKPWKQKGTGRARQG) is disordered.

Belongs to the universal ribosomal protein uL4 family. As to quaternary structure, part of the 50S ribosomal subunit.

One of the primary rRNA binding proteins, this protein initially binds near the 5'-end of the 23S rRNA. It is important during the early stages of 50S assembly. It makes multiple contacts with different domains of the 23S rRNA in the assembled 50S subunit and ribosome. Functionally, forms part of the polypeptide exit tunnel. This chain is Large ribosomal subunit protein uL4, found in Macrococcus caseolyticus (strain JCSC5402) (Macrococcoides caseolyticum).